Here is a 790-residue protein sequence, read N- to C-terminus: Centrosomal protein of 78 kDa (790 aa).

Disordered regions lie at residues 325 to 345 (YQWVTSPSSKEPSKTAKQRKK), 362 to 385 (GLATKKPSSNGRKQGLGKDCYAPN), 428 to 462 (VTVTVESPSSSETDETEDSSESVQEAPQKTSIKEE), 654 to 732 (AKTG…LNEP), and 756 to 790 (KTIKSKPNLLEHSESDTLGSDFELQERVHSSAHLT). Ser330 and Ser332 each carry phosphoserine. Residues 428-438 (VTVTVESPSSS) are compositionally biased toward low complexity. Residues 455–510 (QKTSIKEETLQEKLEECLRQLKEERVIRLKADKRVSELEHENAQLRNINFSLSEAL) adopt a coiled-coil conformation. Basic and acidic residues-rich tracts occupy residues 693–708 (PSRRPSAERHPRKDLL) and 721–732 (GPGDRRSLLNEP).

The protein belongs to the CEP78 family. In terms of assembly, interacts with PLK4. Interacts with FAM161A. Interacts with IFT20; regulating IFT20 stability and localization. Interacts with TTC21A; regulating TTC21A stability and localization. Interacts with USP16; promoting USP16-dependent deubiquitination of tektins. Interacts with DCAF1/VPRBP; promoting localization of the EDVP complex to centrosomes. Interacts with CEP350; promoting CEP78 localization to centrosome and centriole. Expressed by photoreceptor cells in the retina.

The protein resides in the cytoplasm. It is found in the cytoskeleton. The protein localises to the microtubule organizing center. It localises to the centrosome. Its subcellular location is the centriole. The protein resides in the cilium basal body. Centriole wall protein that localizes to mature centrioles and regulates centriole and cilia biogenesis. Involved in centrosome duplication: required for efficient PLK4 centrosomal localization and PLK4-induced overduplication of centrioles. Involved in cilium biogenesis and controls cilium length. Acts as a regulator of protein stability by preventing ubiquitination of centrosomal proteins, such as CCP110 and tektins. Associates with the EDVP complex, preventing ubiquitination and degradation of CCP110. Promotes deubiquitination of tektin proteins (TEKT1, TEKT2, TEK3, TEKT4 and TEKT5) via its interaction with USP16. In Mus musculus (Mouse), this protein is Centrosomal protein of 78 kDa.